Reading from the N-terminus, the 469-residue chain is DNA polymerase delta subunit 2 (469 aa).

N-acetylmethionine is present on Met1. Ser257 bears the Phosphoserine mark.

The protein belongs to the DNA polymerase delta/II small subunit family. Component of both the DNA polymerase delta and DNA polymerase zeta complexes. Component of the tetrameric DNA polymerase delta complex (Pol-delta4), which consists of POLD1/p125, POLD2/p50, POLD3/p66/p68 and POLD4/p12, with POLD1 bearing DNA polymerase and 3' to 5' proofreading exonuclease activities. Within Pol-delta4, directly interacts with POLD1, POLD3 and POLD4. Following stress caused by DNA damaging agents or by replication stress, POLD4 is degraded and Pol-delta4 is converted into a trimeric form of the complex (Pol-delta3), which consists of POLD1, POLD2 and POLD3. Pol-delta3 is the major form occurring at S phase replication sites, as well as DNA damage sites. Also observed as a dimeric complex with POLD2 (Pol-delta2 complex). Pol-delta2 is relatively insensitive to the PCNA stimulation (2-5-fold) compared to Pol-delta4 that is stimulated by over 50-fold. Contrary to the other components of Pol-delta4, does not directly interact with PCNA. As POLD1 and POLD4, directly interacts with WRNIP1; this interaction stimulates DNA polymerase delta-mediated DNA synthesis, independently of the presence of PCNA. This stimulation may be due predominantly to an increase of initiation frequency and also to increased processivity. Directly interacts with POLDIP2 and POLDIP3. Directly interacts with KCTD13/PDIP1; in the presence of PCNA, this interaction may stimulate DNA polymerase activity. Component of the tetrameric Pol-zeta complex (Pol-zeta4), which consists of REV3L, MAD2L2, POLD2 and POLD3, with REV3L bearing DNA polymerase catalytic activity. Interacts with KCTD10.

The protein localises to the nucleus. Functionally, accessory component of both the DNA polymerase delta complex and the DNA polymerase zeta complex. As a component of the trimeric and tetrameric DNA polymerase delta complexes (Pol-delta3 and Pol-delta4, respectively), plays a role in high fidelity genome replication, including in lagging strand synthesis, and repair. Pol-delta3 and Pol-delta4 are characterized by the absence or the presence of POLD4. They exhibit differences in catalytic activity. Most notably, Pol-delta3 shows higher proofreading activity than Pol-delta4. Although both Pol-delta3 and Pol-delta4 process Okazaki fragments in vitro, Pol-delta3 may also be better suited to fulfill this task, exhibiting near-absence of strand displacement activity compared to Pol-delta4 and stalling on encounter with the 5'-blocking oligonucleotides. Pol-delta3 idling process may avoid the formation of a gap, while maintaining a nick that can be readily ligated. Along with DNA polymerase kappa, DNA polymerase delta carries out approximately half of nucleotide excision repair (NER) synthesis following UV irradiation. Under conditions of DNA replication stress, required for the repair of broken replication forks through break-induced replication (BIR). Involved in the translesion synthesis (TLS) of templates carrying O6-methylguanine or abasic sites performed by Pol-delta4, independently of DNA polymerase zeta (REV3L) or eta (POLH). Facilitates abasic site bypass by DNA polymerase delta by promoting extension from the nucleotide inserted opposite the lesion. Also involved in TLS as a component of the DNA polymerase zeta complex. Along with POLD3, dramatically increases the efficiency and processivity of DNA synthesis of the DNA polymerase zeta complex compared to the minimal zeta complex, consisting of only REV3L and REV7. The protein is DNA polymerase delta subunit 2 (Pold2) of Mus musculus (Mouse).